The sequence spans 487 residues: Glutamyl-tRNA(Gln) amidotransferase subunit A (487 aa).

Catalysis depends on charge relay system residues lysine 79 and serine 154. Residue serine 178 is the Acyl-ester intermediate of the active site.

It belongs to the amidase family. GatA subfamily. Heterotrimer of A, B and C subunits.

It catalyses the reaction L-glutamyl-tRNA(Gln) + L-glutamine + ATP + H2O = L-glutaminyl-tRNA(Gln) + L-glutamate + ADP + phosphate + H(+). In terms of biological role, allows the formation of correctly charged Gln-tRNA(Gln) through the transamidation of misacylated Glu-tRNA(Gln) in organisms which lack glutaminyl-tRNA synthetase. The reaction takes place in the presence of glutamine and ATP through an activated gamma-phospho-Glu-tRNA(Gln). This is Glutamyl-tRNA(Gln) amidotransferase subunit A from Moorella thermoacetica (strain ATCC 39073 / JCM 9320).